A 328-amino-acid chain; its full sequence is Beta-ribofuranosylphenol 5'-phosphate synthase (328 aa).

The protein belongs to the beta-RFA-P synthase family. As to quaternary structure, homodimer. Mg(2+) serves as cofactor.

It carries out the reaction 5-phospho-alpha-D-ribose 1-diphosphate + 4-hydroxybenzoate + H(+) = 4-(beta-D-ribofuranosyl)phenol 5'-phosphate + CO2 + diphosphate. The catalysed reaction is 4-aminobenzoate + 5-phospho-alpha-D-ribose 1-diphosphate + H(+) = 4-(beta-D-ribofuranosyl)aminobenzene 5'-phosphate + CO2 + diphosphate. It functions in the pathway cofactor biosynthesis; 5,6,7,8-tetrahydromethanopterin biosynthesis. Functionally, catalyzes the condensation of 4-hydroxybenzoate (HB) with 5-phospho-alpha-D-ribose 1-diphosphate (PRPP) to produce beta-ribofuranosylphenol 5'-phosphate (beta-RFH-P). Also catalyzes the condensation of 4-aminobenzoate (pABA) with PRPP to produce beta-ribofuranosylaminobenzene 5'-phosphate (beta-RFA-P). Only 4-hydroxybenzoate is known to be biosynthesized by methanogenic archaea, but 4-aminobenzoate can be used as substrate by growing methanogens when it is present in the growth medium. This chain is Beta-ribofuranosylphenol 5'-phosphate synthase, found in Methanocaldococcus jannaschii (strain ATCC 43067 / DSM 2661 / JAL-1 / JCM 10045 / NBRC 100440) (Methanococcus jannaschii).